The sequence spans 307 residues: RHOMBOID-like protein 6, mitochondrial (307 aa).

The N-terminal 62 residues, 1–62 (MRSRDMERGR…DCVAKLLRRF (62 aa)), are a transit peptide targeting the mitochondrion. The next 6 helical transmembrane spans lie at 105–125 (WLHAGIIHLVMNMFDVIIFGI), 136–156 (IGLIYLISGFGGSILSALFLQ), 159–179 (ISVGASGALLGLMGAMLSELL), 191–211 (ALLSFLFIIAINLAIGLLPWV), 214–234 (FAHIGGLLTGFCLGFILLMQP), and 262–282 (LFFVAAVLVVAGLTVGLVMLF). The active-site Nucleophile is the serine 164. Histidine 216 serves as the catalytic Charge relay system.

It belongs to the peptidase S54 family.

It localises to the mitochondrion membrane. It catalyses the reaction Cleaves type-1 transmembrane domains using a catalytic dyad composed of serine and histidine that are contributed by different transmembrane domains.. Its function is as follows. Probable rhomboid-type serine protease that catalyzes intramembrane proteolysis. Might be involved in response to abiotic stimuli. The sequence is that of RHOMBOID-like protein 6, mitochondrial from Arabidopsis thaliana (Mouse-ear cress).